The primary structure comprises 44 residues: Alpha-amylase inhibitor helianthamide (44 aa).

Intrachain disulfides connect cysteine 6–cysteine 38, cysteine 16–cysteine 33, and cysteine 20–cysteine 39. The interval 7 to 10 (YIYH) is inhibitory motif.

This sequence belongs to the sea anemone alpha-amylase inhibitor family.

Its subcellular location is the secreted. Its function is as follows. Specific pancreatic alpha-amylase (AMY2A) inhibitor. The recombinant peptide inhibits human pancreatic (Ki=0.01 nM) and porcine pancreatic alpha-amylases (Ki=0.1 nM). This Stichodactyla helianthus (Sun anemone) protein is Alpha-amylase inhibitor helianthamide.